Here is an 852-residue protein sequence, read N- to C-terminus: Carbohydrate-responsive element-binding protein (852 aa).

The span at 1-12 shows a compositional bias: low complexity; that stretch reads MAGALAGLAAGL. Disordered stretches follow at residues 1-36 and 54-80; these read MAGA…SLRR and VSSP…FGPR. 3 positions are modified to phosphoserine: S20, S23, and S25. T27 carries the phosphothreonine modification. At S29 the chain carries Phosphoserine. At S196 the chain carries Phosphoserine. Disordered regions lie at residues 328–365, 486–527, and 548–648; these read DSLF…CPGP, PCFS…NNPC, and STLL…NKTE. A compositionally biased stretch (low complexity) spans 505-521; that stretch reads ASPPTLAPATASPPTTA. Residues 548 to 559 show a composition bias toward polar residues; it reads STLLRSPGSPQE. The residue at position 556 (S556) is a Phosphoserine; by AMPK. The span at 568–584 shows a compositional bias: pro residues; sequence FLPPTPAPTPPRPPPGP. Residues S602, S614, and S631 each carry the phosphoserine modification. Residues 649–703 form the bHLH domain; that stretch reads NRRITHISAEQKRRFNIKLGFDTLHGLVSTLSAQPSLKVSKATTLQKTAEYILML. Residues 703–724 form a leucine-zipper region; it reads LQQERAGLQEEAQQLRDEIEEL.

As to quaternary structure, binds DNA as a heterodimer with MLX/TCFL4. Post-translationally, phosphorylation at Ser-556 by AMPK inactivates the DNA-binding activity. As to expression, expressed in liver, heart, kidney, cerebellum and intestinal tissues.

The protein localises to the nucleus. Functionally, binds DNA as a heterodimer with MLX/TCFL4 and activates transcription. Binds to the canonical E box sequence 5'-CACGTG-3'. Plays a role in transcriptional activation of glycolytic target genes. Involved in glucose-responsive gene regulation. Regulates transcription in response to changes in cellular carbohydrate abundance such as occurs during fasting to feeding metabolic transition. Refeeding stimulates MLXIPL/ChREBP transcription factor, leading to increased BCKDK to PPM1K expression ratio, phosphorylation and activation of ACLY that ultimately results in the generation of malonyl-CoA and oxaloacetate immediate substrates of de novo lipogenesis and gluconeogenesis, respectively. This Homo sapiens (Human) protein is Carbohydrate-responsive element-binding protein (MLXIPL).